We begin with the raw amino-acid sequence, 465 residues long: MSIQQKLWGGRFEEATDAFVEAFTASVDFDKRLASHDIRGSIAHATMLERLGLLTREELQAIVSGLEAIGAEIEAGQFPWEVSLEDVHMNIEARLTQRIGEAGKKLHTGRSRNDQVATDVRLYLRTEIDRICGMILRLQTALVDLAEREAATIMPGFTHLQVAQPVTFGHHMMAWYEMLSRDYDRLRDCRKRVNVMPLGAAALAGSSFPLDRDYTAALLDFSGPAANSLDAVSDRDFAIEFAACASLVLMHLSRFSEELILWTSAQFGFIDLPDAFCTGSSIMPQKKNPDVPELIRGKSARVFGHLFALLTLMKSQPLAYNKDNQEDKEPLFDTVDTLSGCLRAFADMMPHVRPNRSAMYASARKGYATATDLADYLVRRGTPFRDAHEIVGKAVRLGMESSRDLADIPLEELRSLSSVIGPDVYQVLTLEGSVAARSHPGGTAPDCVKRAVAAARVRLAALQGS.

This sequence belongs to the lyase 1 family. Argininosuccinate lyase subfamily.

The protein resides in the cytoplasm. The catalysed reaction is 2-(N(omega)-L-arginino)succinate = fumarate + L-arginine. The protein operates within amino-acid biosynthesis; L-arginine biosynthesis; L-arginine from L-ornithine and carbamoyl phosphate: step 3/3. This Methylococcus capsulatus (strain ATCC 33009 / NCIMB 11132 / Bath) protein is Argininosuccinate lyase.